We begin with the raw amino-acid sequence, 246 residues long: Ribonuclease PH (246 aa).

The segment at 1-33 (MTPPKLPVREGRDALTPRPVSVQRGVNPHAPGS) is disordered. Phosphate contacts are provided by residues Arg90 and 128–130 (GTR).

This sequence belongs to the RNase PH family. As to quaternary structure, homohexameric ring arranged as a trimer of dimers.

The catalysed reaction is tRNA(n+1) + phosphate = tRNA(n) + a ribonucleoside 5'-diphosphate. In terms of biological role, phosphorolytic 3'-5' exoribonuclease that plays an important role in tRNA 3'-end maturation. Removes nucleotide residues following the 3'-CCA terminus of tRNAs; can also add nucleotides to the ends of RNA molecules by using nucleoside diphosphates as substrates, but this may not be physiologically important. Probably plays a role in initiation of 16S rRNA degradation (leading to ribosome degradation) during starvation. This chain is Ribonuclease PH, found in Deinococcus radiodurans (strain ATCC 13939 / DSM 20539 / JCM 16871 / CCUG 27074 / LMG 4051 / NBRC 15346 / NCIMB 9279 / VKM B-1422 / R1).